The following is a 235-amino-acid chain: Rab-like protein 3 (235 aa).

The interval 1-235 (MASLDRVKVL…GGNFKSLHYD (235 aa)) is small GTPase-like. GTP contacts are provided by residues 16–21 (GVGKSS), 148–150 (KLD), and 179–180 (DC).

This sequence belongs to the small GTPase superfamily. Rab family. Homodimer.

In terms of biological role, required for KRAS signaling regulation and modulation of cell proliferation. Regulator of KRAS prenylation, and probably prenylation of other small GTPases. Required for lymphocyte development and function. Not required for myeloid cell development. This Xenopus tropicalis (Western clawed frog) protein is Rab-like protein 3 (rabl3).